We begin with the raw amino-acid sequence, 159 residues long: 3-hydroxyacyl-[acyl-carrier-protein] dehydratase FabZ (159 aa).

Residue His-62 is part of the active site.

This sequence belongs to the thioester dehydratase family. FabZ subfamily.

It is found in the cytoplasm. It catalyses the reaction a (3R)-hydroxyacyl-[ACP] = a (2E)-enoyl-[ACP] + H2O. In terms of biological role, involved in unsaturated fatty acids biosynthesis. Catalyzes the dehydration of short chain beta-hydroxyacyl-ACPs and long chain saturated and unsaturated beta-hydroxyacyl-ACPs. The protein is 3-hydroxyacyl-[acyl-carrier-protein] dehydratase FabZ of Methylobacterium nodulans (strain LMG 21967 / CNCM I-2342 / ORS 2060).